The chain runs to 460 residues: Putative 2,3-dihydroxypropane-1-sulfonate exporter (460 aa).

Over 1–18 (MSQTSSNPATLRLPFKEK) the chain is Cytoplasmic. The helical transmembrane segment at 19–39 (LAYGLGDLGSNILLDIGTLYL) threads the bilayer. Topologically, residues 40–46 (LKFYTDV) are periplasmic. A helical membrane pass occupies residues 47 to 67 (LGLPGTYGGIIFLIAKFFTAF). Topologically, residues 68–91 (TDMGTGIMLDSRRKIGPKGKFRPF) are cytoplasmic. A helical membrane pass occupies residues 92–112 (VLYAAFPVTLLAIANFVGTPF). Topologically, residues 113–122 (EVTGKTVVAT) are periplasmic. The chain crosses the membrane as a helical span at residues 123–143 (MLFMLYGLVFSMMNCSYGAMV). Residues 144 to 161 (PAITKNPDERASLAAWRQ) are Cytoplasmic-facing. A helical transmembrane segment spans residues 162 to 182 (GGATLGLLLCTVGFVPVMNLI). At 183–190 (EGNAQLSY) the chain is on the periplasmic side. The helical transmembrane segment at 191–211 (IFAATLFSLFGLLFMWLCYAG) threads the bilayer. Residues 212 to 242 (VKERYVEVKPVDSAQKPGLLQSFRAIAGNRP) are Cytoplasmic-facing. Residues 243-263 (LFILCIANLCTLGAFNVKLAI) form a helical membrane-spanning segment. The Periplasmic portion of the chain corresponds to 264 to 275 (QVYYTQYVLNDP). The chain crosses the membrane as a helical span at residues 276-296 (ILLSWMGFFSMGCIFIGVFLM). The Cytoplasmic portion of the chain corresponds to 297 to 307 (PGAVRRFGKKK). Residues 308 to 328 (VYIGGLLIWVAGDLLNYFFGG) traverse the membrane as a helical segment. Glycine 329 is a topological domain (periplasmic). The chain crosses the membrane as a helical span at residues 330 to 350 (SVSFVAFSCLAFFGSAFVNSL). At 351-386 (NWALVSDTVEYGEWRTGVRSEGTVYTGFTFFRKVSQ) the chain is on the cytoplasmic side. Residues 387-407 (ALAGFFPGWMLTQIGYIPNVV) form a helical membrane-spanning segment. Residues 408 to 418 (QSAGTVEGLRQ) lie on the Periplasmic side of the membrane. The helical transmembrane segment at 419–439 (LIFIYPCVLAVITIIAMGCFY) threads the bilayer. The Cytoplasmic segment spans residues 440-460 (NLNEKMYVRIVEEIEARKHTV).

Belongs to the sodium:galactoside symporter (TC 2.A.2) family.

It localises to the cell inner membrane. Its function is as follows. Could be involved in the export of 2,3-dihydroxypropane-1-sulfonate (DHPS). The chain is Putative 2,3-dihydroxypropane-1-sulfonate exporter (yihP) from Salmonella typhimurium (strain LT2 / SGSC1412 / ATCC 700720).